A 130-amino-acid polypeptide reads, in one-letter code: Glycine cleavage system H protein (130 aa).

Residues 24-106 enclose the Lipoyl-binding domain; the sequence is SVTVGITEHA…YGDGWIMRIQ (83 aa). The residue at position 65 (Lys65) is an N6-lipoyllysine.

This sequence belongs to the GcvH family. The glycine cleavage system is composed of four proteins: P, T, L and H. It depends on (R)-lipoate as a cofactor.

The glycine cleavage system catalyzes the degradation of glycine. The H protein shuttles the methylamine group of glycine from the P protein to the T protein. The chain is Glycine cleavage system H protein from Halorhodospira halophila (strain DSM 244 / SL1) (Ectothiorhodospira halophila (strain DSM 244 / SL1)).